The sequence spans 238 residues: Dolichyldiphosphatase 1 (238 aa).

The next 4 membrane-spanning stretches (helical) occupy residues 33-53 (LAYL…LIIF), 100-120 (PSSH…FLYL), 130-150 (FLDL…AFLV), and 162-182 (WSQV…WFIF).

It belongs to the dolichyldiphosphatase family.

It localises to the endoplasmic reticulum membrane. The catalysed reaction is a di-trans,poly-cis-dolichyl diphosphate + H2O = a di-trans,poly-cis-dolichyl phosphate + phosphate + H(+). It participates in protein modification; protein glycosylation. Its function is as follows. Required for efficient N-glycosylation. Necessary for maintaining optimal levels of dolichol-linked oligosaccharides. Hydrolyzes dolichyl pyrophosphate at a very high rate and dolichyl monophosphate at a much lower rate. Does not act on phosphatidate. The sequence is that of Dolichyldiphosphatase 1 (DOLPP1) from Plecturocebus moloch (Dusky titi monkey).